The sequence spans 266 residues: Translation initiation factor 2 subunit alpha (266 aa).

Positions 12 to 83 (GEILIATVKQ…RKGTVDVSLK (72 aa)) constitute an S1 motif domain.

The protein belongs to the eIF-2-alpha family. In terms of assembly, heterotrimer composed of an alpha, a beta and a gamma chain.

Functionally, eIF-2 functions in the early steps of protein synthesis by forming a ternary complex with GTP and initiator tRNA. The chain is Translation initiation factor 2 subunit alpha from Saccharolobus islandicus (strain L.S.2.15 / Lassen #1) (Sulfolobus islandicus).